Consider the following 972-residue polypeptide: Translation initiation factor IF-2 (972 aa).

Positions 48 to 63 (DHLRKSHGATDGDKRK) are enriched in basic and acidic residues. 2 disordered regions span residues 48 to 85 (DHLR…KART) and 99 to 385 (RDDV…QAPT). Residues 105–114 (GAEQGQAQVA) show a composition bias toward low complexity. Residues 121-181 (ELKRREEEAR…EEEAAAKRVA (61 aa)) show a composition bias toward basic and acidic residues. Residues 182–205 (AEAAAAQQQAAAQQAAAAEQQEAA) are compositionally biased toward low complexity. Residues 212 to 263 (DEARAAAERAAQREAAKKAEDAAREAADKARAEQEEISKRRAAAEAEARAIR) show a composition bias toward basic and acidic residues. Over residues 279–288 (PPKPVEPPKP) the composition is skewed to pro residues. Over residues 313 to 328 (PAGAAAPATTAPAGAG) the composition is skewed to low complexity. Gly residues predominate over residues 357–370 (SSGGVDRGWRGGPK). The region spanning 472–641 (PRPPVVTVMG…LLQAEVLELK (170 aa)) is the tr-type G domain. A G1 region spans residues 481–488 (GHVDHGKT). 481–488 (GHVDHGKT) lines the GTP pocket. The interval 506-510 (GITQH) is G2. The interval 527 to 530 (DTPG) is G3. GTP is bound by residues 527-531 (DTPGH) and 581-584 (NKID). The tract at residues 581-584 (NKID) is G4. A G5 region spans residues 617-619 (SAK).

The protein belongs to the TRAFAC class translation factor GTPase superfamily. Classic translation factor GTPase family. IF-2 subfamily.

It localises to the cytoplasm. Its function is as follows. One of the essential components for the initiation of protein synthesis. Protects formylmethionyl-tRNA from spontaneous hydrolysis and promotes its binding to the 30S ribosomal subunits. Also involved in the hydrolysis of GTP during the formation of the 70S ribosomal complex. The sequence is that of Translation initiation factor IF-2 from Burkholderia lata (strain ATCC 17760 / DSM 23089 / LMG 22485 / NCIMB 9086 / R18194 / 383).